The following is a 133-amino-acid chain: Small ribosomal subunit protein uS8 (133 aa).

Belongs to the universal ribosomal protein uS8 family. As to quaternary structure, part of the 30S ribosomal subunit. Contacts proteins S5 and S12.

In terms of biological role, one of the primary rRNA binding proteins, it binds directly to 16S rRNA central domain where it helps coordinate assembly of the platform of the 30S subunit. This chain is Small ribosomal subunit protein uS8, found in Deinococcus radiodurans (strain ATCC 13939 / DSM 20539 / JCM 16871 / CCUG 27074 / LMG 4051 / NBRC 15346 / NCIMB 9279 / VKM B-1422 / R1).